The following is a 989-amino-acid chain: Phosphoenolpyruvate carboxylase (989 aa).

Active-site residues include His-175 and Lys-630.

This sequence belongs to the PEPCase type 1 family. Requires Mg(2+) as cofactor.

The enzyme catalyses oxaloacetate + phosphate = phosphoenolpyruvate + hydrogencarbonate. Its function is as follows. Forms oxaloacetate, a four-carbon dicarboxylic acid source for the tricarboxylic acid cycle. The polypeptide is Phosphoenolpyruvate carboxylase (Prochlorococcus marinus subsp. pastoris (strain CCMP1986 / NIES-2087 / MED4)).